The chain runs to 85 residues: Large ribosomal subunit protein bL27 (85 aa).

The interval 1–22 is disordered; the sequence is MAHKKGASSTRNGRDSNAQRLG. Positions 7–19 are enriched in polar residues; that stretch reads ASSTRNGRDSNAQ.

The protein belongs to the bacterial ribosomal protein bL27 family.

The polypeptide is Large ribosomal subunit protein bL27 (Leifsonia xyli subsp. xyli (strain CTCB07)).